Reading from the N-terminus, the 426-residue chain is Glutamate-1-semialdehyde 2,1-aminomutase (426 aa).

The residue at position 265 (K265) is an N6-(pyridoxal phosphate)lysine.

Belongs to the class-III pyridoxal-phosphate-dependent aminotransferase family. HemL subfamily. As to quaternary structure, homodimer. Pyridoxal 5'-phosphate is required as a cofactor.

The protein localises to the cytoplasm. It carries out the reaction (S)-4-amino-5-oxopentanoate = 5-aminolevulinate. The protein operates within porphyrin-containing compound metabolism; protoporphyrin-IX biosynthesis; 5-aminolevulinate from L-glutamyl-tRNA(Glu): step 2/2. The sequence is that of Glutamate-1-semialdehyde 2,1-aminomutase from Escherichia coli O81 (strain ED1a).